The sequence spans 82 residues: Large ribosomal subunit protein uL23 (82 aa).

This sequence belongs to the universal ribosomal protein uL23 family. In terms of assembly, part of the 50S ribosomal subunit. Contacts protein L29.

In terms of biological role, binds to 23S rRNA. One of the proteins that surrounds the polypeptide exit tunnel on the outside of the ribosome. In Sulfurisphaera tokodaii (strain DSM 16993 / JCM 10545 / NBRC 100140 / 7) (Sulfolobus tokodaii), this protein is Large ribosomal subunit protein uL23.